A 119-amino-acid chain; its full sequence is Large ribosomal subunit protein bL12 (119 aa).

The protein belongs to the bacterial ribosomal protein bL12 family. In terms of assembly, homodimer. Part of the ribosomal stalk of the 50S ribosomal subunit. Forms a multimeric L10(L12)X complex, where L10 forms an elongated spine to which 2 to 4 L12 dimers bind in a sequential fashion. Binds GTP-bound translation factors.

Functionally, forms part of the ribosomal stalk which helps the ribosome interact with GTP-bound translation factors. Is thus essential for accurate translation. The sequence is that of Large ribosomal subunit protein bL12 from Bacillus anthracis (strain A0248).